We begin with the raw amino-acid sequence, 444 residues long: Cerebral cavernous malformations 2 protein (444 aa).

The tract at residues 1-37 (MEEEGKKGKKPGIVSPFKRVFLKGEKSRDKKAHEKVT) is disordered. The residue at position 15 (S15) is a Phosphoserine. A compositionally biased stretch (basic and acidic residues) spans 22–37 (LKGEKSRDKKAHEKVT). The 190-residue stretch at 59-248 (LSDYIEKEVK…TPTHHLSLHS (190 aa)) folds into the PID domain. The residue at position 164 (S164) is a Phosphoserine. Residues 283-376 (SKTISESELS…NFLETIGVKD (94 aa)) are harmonin homology domain. Phosphoserine occurs at positions 384 and 393. The interval 391 to 423 (ALSTTSSSTTNGNRATGSSDDRSAPSEGDEWDR) is disordered. Over residues 392–408 (LSTTSSSTTNGNRATGS) the composition is skewed to low complexity. The residue at position 394 (T394) is a Phosphothreonine. S396 is subject to Phosphoserine. Phosphothreonine is present on T399.

It belongs to the CCM2 family. As to quaternary structure, part of a complex with MAP2K3, MAP3K3 and RAC1. Binds RAC1 directly and independently of its nucleotide-bound state. Interacts with HEG1 and KRIT1; KRIT1 greatly facilitates the interaction with HEG1. Interacts with PDCD10.

The protein localises to the cytoplasm. Its function is as follows. Component of the CCM signaling pathway which is a crucial regulator of heart and vessel formation and integrity. May act through the stabilization of endothelial cell junctions. May function as a scaffold protein for MAP2K3-MAP3K3 signaling. Seems to play a major role in the modulation of MAP3K3-dependent p38 activation induced by hyperosmotic shock. The sequence is that of Cerebral cavernous malformations 2 protein (CCM2) from Homo sapiens (Human).